Reading from the N-terminus, the 179-residue chain is Ribulose bisphosphate carboxylase small subunit, chloroplastic 3 (179 aa).

The N-terminal 58 residues, 1–58 (MASSATMLSSVATAARAAPAQASMVAPFVGLKSASAFPVTQKPATGLSTLPSNGGRVQ), are a transit peptide targeting the chloroplast.

This sequence belongs to the RuBisCO small chain family. Heterohexadecamer of 8 large and 8 small subunits.

It is found in the plastid. The protein resides in the chloroplast. RuBisCO catalyzes two reactions: the carboxylation of D-ribulose 1,5-bisphosphate, the primary event in carbon dioxide fixation, as well as the oxidative fragmentation of the pentose substrate. Both reactions occur simultaneously and in competition at the same active site. Although the small subunit is not catalytic it is essential for maximal activity. This Fritillaria agrestis (Stinkbells) protein is Ribulose bisphosphate carboxylase small subunit, chloroplastic 3.